The chain runs to 242 residues: Pyr4-family terpene cyclase mfmH (242 aa).

4 helical membrane passes run 25 to 45 (VQDG…ILYI), 55 to 75 (GMPL…GAAI), 80 to 100 (AQVV…YTTW), and 116 to 136 (NLGW…WAFL). N-linked (GlcNAc...) asparagine glycosylation is present at Asn-170. The next 2 helical transmembrane spans lie at 175-195 (SWGI…IFVW) and 211-231 (VTIF…FVYA).

The protein belongs to the paxB family.

It localises to the membrane. It functions in the pathway secondary metabolite biosynthesis; terpenoid biosynthesis. Terpene cyclase; part of the gene cluster that mediates the biosynthesis of the phthalide-terpenoid hybrid 11'-O-desmethylfendlerol. Within the pathway, mfmH catalyzes the last step and cyclizes the prenyl unit of 5-O-farnesylcyclopolic acid into a drimane-like structure to yield 11'-O-desmethylfendlerol. The biosynthesis of 11'-O-desmethylfendlerol begins with the NR-PKS mfmB that forms 3,5-dimethylorsellinic acid (DMOA), which is then transformed into the phthalide 5,7-dihydroxy-4-(hydroxymethyl)-6-methylphthalide by the cytochrome P450 monooxygenase mfmA and the hydrolase mfmC. Subsequently, the methyltransferase mfmE catalyzes 7-O-methylation to yield 5-hydroxy-4-(hydroxymethyl)-7-methoxy-6-methylphthalide, which undergoes C-3 hydroxylation by the cytochrome P450 monooxygenase mfmF. The resultant cyclopolic acid (2,5-dihydroxy-4-(hydroxymethyl)-7-methoxy-6-methylphthalide) is then farnesylated by the DMATS-type prenyltransferase mfmD to afford 5-O-farnesylcyclopolic acid. Finally, the Pyr4-family terpene cyclase mfmH cyclizes the farnesyl moiety of 5-O-farnesylcyclopolic acid into a drimane-like structure, thus completing the biosynthesis of 11'-O-desmethylfendlerol. This Annulohypoxylon moriforme (Filamentous fungus) protein is Pyr4-family terpene cyclase mfmH.